The chain runs to 380 residues: Epoxyqueuosine reductase (380 aa).

Aspartate 139 functions as the Proton donor in the catalytic mechanism. Positions isoleucine 181–glutamine 213 constitute a 4Fe-4S ferredoxin-type 1 domain. Positions 193, 196, 199, 203, 219, 245, 248, and 252 each coordinate [4Fe-4S] cluster. In terms of domain architecture, 4Fe-4S ferredoxin-type 2 spans tyrosine 234–aspartate 263.

The protein belongs to the QueG family. In terms of assembly, monomer. Requires cob(II)alamin as cofactor. [4Fe-4S] cluster is required as a cofactor.

Its subcellular location is the cytoplasm. The catalysed reaction is epoxyqueuosine(34) in tRNA + AH2 = queuosine(34) in tRNA + A + H2O. The protein operates within tRNA modification; tRNA-queuosine biosynthesis. In terms of biological role, catalyzes the conversion of epoxyqueuosine (oQ) to queuosine (Q), which is a hypermodified base found in the wobble positions of tRNA(Asp), tRNA(Asn), tRNA(His) and tRNA(Tyr). The polypeptide is Epoxyqueuosine reductase (Staphylococcus aureus (strain NCTC 8325 / PS 47)).